A 266-amino-acid polypeptide reads, in one-letter code: Phage-like element PBSX protein XkdC (266 aa).

Position 124–131 (124–131) interacts with ATP; that stretch reads GQPGSGKT.

The protein to B.subtilis YqaM.

Functionally, may function as a transcriptional antiterminator. This Bacillus subtilis (strain 168) protein is Phage-like element PBSX protein XkdC (xkdC).